Here is a 397-residue protein sequence, read N- to C-terminus: Linalool dehydratase/isomerase (397 aa).

The N-terminal stretch at 1–26 is a signal peptide; sequence MRFTLKTTAIVSAAALLAGFGPPPRA. Asp-64 functions as the Proton donor/acceptor in the catalytic mechanism. Intrachain disulfides connect Cys-74–Cys-127 and Cys-196–Cys-205. Cys-196 is a binding site for (2E)-geraniol.

As to quaternary structure, homotetramer. Homopentamer.

The protein localises to the periplasm. It carries out the reaction (S)-linalool = beta-myrcene + H2O. It catalyses the reaction (2E)-geraniol = (S)-linalool. It participates in terpene metabolism; monoterpene degradation. Is inhibited by molecular oxygen, high salt concentrations (NaCl, KCl, or MgCl(2)), urea, and Ti(III)citrate. Activity is not affected by EDTA. Functionally, anaerobically catalyzes the stereospecific hydration of beta-myrcene to (3S)-linalool and the isomerization of (3S)-linalool to geraniol. Is thus involved in the initial steps of the anaerobic degradation of the monoterpene beta-myrcene. Also catalyzes the reverse reactions, i.e. the isomerization of geraniol to linalool and the dehydration of linalool to myrcene. In this direction, the formation of myrcene from geraniol may be seen as a detoxification process for the monoterpene alcohol. Shows a relatively broad substrate specificity and can use various geraniol and linalool derivatives. Substrates required a specific alpha-methylallyl alcohol signature motif. Neither the monoterpenes alpha- and beta-ocimene nor the monoterpenoids citronellol and nerol can be used as substrates. This Castellaniella defragrans (strain DSM 12143 / CCUG 39792 / 65Phen) (Alcaligenes defragrans) protein is Linalool dehydratase/isomerase.